We begin with the raw amino-acid sequence, 307 residues long: Alpha N-terminal protein methyltransferase 1 (307 aa).

The segment covering Glu-38–Ala-51 has biased composition (low complexity). A disordered region spans residues Glu-38–Gly-60. Residues Gly-123, Arg-128, Glu-145–Val-147, Leu-179–Gln-180, and Gln-195 each bind S-adenosyl-L-methionine.

This sequence belongs to the methyltransferase superfamily. NTM1 family.

The enzyme catalyses N-terminal L-alanyl-L-prolyl-L-lysyl-[protein] + 3 S-adenosyl-L-methionine = N-terminal N,N,N-trimethyl-L-alanyl-L-prolyl-L-lysyl-[protein] + 3 S-adenosyl-L-homocysteine + 3 H(+). The catalysed reaction is N-terminal L-seryl-L-prolyl-L-lysyl-[protein] + 3 S-adenosyl-L-methionine = N-terminal N,N,N-trimethyl-L-seryl-L-prolyl-L-lysyl-[protein] + 3 S-adenosyl-L-homocysteine + 3 H(+). It catalyses the reaction N-terminal L-prolyl-L-prolyl-L-lysyl-[protein] + 2 S-adenosyl-L-methionine = N-terminal N,N-dimethyl-L-prolyl-L-prolyl-L-lysyl-[protein] + 2 S-adenosyl-L-homocysteine + 2 H(+). Functionally, alpha-N-methyltransferase that methylates the N-terminus of target proteins containing the N-terminal motif [Ala/Pro/Ser]-Pro-Lys when the initiator Met is cleaved. Specifically catalyzes mono-, di- or tri-methylation of exposed alpha-amino group of Ala or Ser residue in the [Ala/Ser]-Pro-Lys motif and mono- or di-methylation of Pro in the Pro-Pro-Lys motif. This Oryza sativa subsp. japonica (Rice) protein is Alpha N-terminal protein methyltransferase 1.